Reading from the N-terminus, the 203-residue chain is Holliday junction branch migration complex subunit RuvA (203 aa).

Positions 1-64 are domain I; it reads MIGRLRGIII…EDAQLLYGFN (64 aa). The domain II stretch occupies residues 65–142; that stretch reads NKQERTLFKE…KGLHGDLFTP (78 aa). Residues 143-154 form a flexible linker region; sequence AADLVLTSPASP. The tract at residues 155–203 is domain III; the sequence is ATDDAEQEAVAALVALGYKPQEASRMVSKIARPDTSSETLIREALRAAL.

This sequence belongs to the RuvA family. Homotetramer. Forms an RuvA(8)-RuvB(12)-Holliday junction (HJ) complex. HJ DNA is sandwiched between 2 RuvA tetramers; dsDNA enters through RuvA and exits via RuvB. An RuvB hexamer assembles on each DNA strand where it exits the tetramer. Each RuvB hexamer is contacted by two RuvA subunits (via domain III) on 2 adjacent RuvB subunits; this complex drives branch migration. In the full resolvosome a probable DNA-RuvA(4)-RuvB(12)-RuvC(2) complex forms which resolves the HJ.

It is found in the cytoplasm. The RuvA-RuvB-RuvC complex processes Holliday junction (HJ) DNA during genetic recombination and DNA repair, while the RuvA-RuvB complex plays an important role in the rescue of blocked DNA replication forks via replication fork reversal (RFR). RuvA specifically binds to HJ cruciform DNA, conferring on it an open structure. The RuvB hexamer acts as an ATP-dependent pump, pulling dsDNA into and through the RuvAB complex. HJ branch migration allows RuvC to scan DNA until it finds its consensus sequence, where it cleaves and resolves the cruciform DNA. This is Holliday junction branch migration complex subunit RuvA from Shigella flexneri serotype 5b (strain 8401).